The primary structure comprises 409 residues: Serine/threonine transporter SstT (409 aa).

9 consecutive transmembrane segments (helical) span residues 24–44 (LALG…AGLF), 48–68 (FVGA…AATI), 82–102 (IIVL…IAGM), 142–162 (AIAN…GAAL), 194–214 (LGIF…ALAG), 218–238 (LLAV…PAIV), 292–312 (IPLG…VLAM), 319–339 (GIQV…VSAC), and 365–385 (VAMQ…SAET).

The protein belongs to the dicarboxylate/amino acid:cation symporter (DAACS) (TC 2.A.23) family.

The protein localises to the cell inner membrane. It carries out the reaction L-serine(in) + Na(+)(in) = L-serine(out) + Na(+)(out). The enzyme catalyses L-threonine(in) + Na(+)(in) = L-threonine(out) + Na(+)(out). Involved in the import of serine and threonine into the cell, with the concomitant import of sodium (symport system). The chain is Serine/threonine transporter SstT from Neisseria meningitidis serogroup C (strain 053442).